A 274-amino-acid chain; its full sequence is Large ribosomal subunit protein uL2 (274 aa).

Positions 224–256 (VMNPVDHPHGGGEGKTGEGRHPVDPWGNLTKGY) are disordered. Residues 229–246 (DHPHGGGEGKTGEGRHPV) are compositionally biased toward basic and acidic residues.

It belongs to the universal ribosomal protein uL2 family. Part of the 50S ribosomal subunit. Forms a bridge to the 30S subunit in the 70S ribosome.

Its function is as follows. One of the primary rRNA binding proteins. Required for association of the 30S and 50S subunits to form the 70S ribosome, for tRNA binding and peptide bond formation. It has been suggested to have peptidyltransferase activity; this is somewhat controversial. Makes several contacts with the 16S rRNA in the 70S ribosome. This chain is Large ribosomal subunit protein uL2, found in Polaromonas naphthalenivorans (strain CJ2).